A 243-amino-acid polypeptide reads, in one-letter code: CAVP-target protein (243 aa).

A disordered region spans residues 1 to 22 (PKPPAEAKPAAKPAAPPAAANP). The segment covering 7–20 (AKPAAKPAAPPAAA) has biased composition (low complexity). The region spanning 35–62 (SAATRIQASFRMHKNRMALKEKSIPKFS) is the IQ domain. Ig-like C2-type domains are found at residues 59 to 150 (PKFS…LALE) and 151 to 243 (VPAK…VKVN).

Its function is as follows. This protein is the target of CAVP, which binds to it in a calcium-dependent manner. This chain is CAVP-target protein, found in Branchiostoma lanceolatum (Common lancelet).